The following is a 178-amino-acid chain: Deoxyuridine 5'-triphosphate nucleotidohydrolase (178 aa).

It belongs to the dUTPase family. Mg(2+) serves as cofactor.

The enzyme catalyses dUTP + H2O = dUMP + diphosphate + H(+). It participates in pyrimidine metabolism; dUMP biosynthesis; dUMP from dCTP (dUTP route): step 2/2. In terms of biological role, this enzyme is involved in nucleotide metabolism: it produces dUMP, the immediate precursor of thymidine nucleotides and it decreases the intracellular concentration of dUTP so that uracil cannot be incorporated into DNA. This chain is Deoxyuridine 5'-triphosphate nucleotidohydrolase, found in Fowl adenovirus A serotype 1 (strain CELO / Phelps) (FAdV-1).